Here is a 526-residue protein sequence, read N- to C-terminus: MPSLRRLLPFLAAGSAALASQDTFQGKCTGFADKINLPDVRVNFVNYVPGGTNLSLPDNPTSCGTTSQVVSEDVCRIAMAVATSNSSEITLEAWLPQNYTGRFLSTGNGGLSGCIQYYDLAYTSGLGFATVGANSGHNGTSGEPFYHHPEVLEDFVHRSVHTGVVVGKQLTKLFYEEGFKKSYYLGCSTGGRQGFKSVQKYPNDFDGVVAGAPAFNMINLMSWSAHFYSITGPVGSDTYLSPDLWNITHKEILRQCDGIDGAEDGIIEDPSLCSPVLEAIICKPGQNTTECLTGKQAHTVREIFSPLYGVNGTLLYPRMQPGSEVMASSIMYNGQPFQYSADWYRYVVYENPNWDATKFSVRDAAVALKQNPFNLQTWDADISSFRKAGGKVLTYHGLMDQLISSENSKLYYARVAETMNVPPEELDEFYRFFQISGMAHCSGGDGAYGIGNQLVTYNDANPENNVLMAMVQWVEKGIAPETIRGAKFTNGTGSAVEYTRKHCRYPRRNVYKGPGNYTDENAWQCV.

An N-terminal signal peptide occupies residues 1–19; it reads MPSLRRLLPFLAAGSAALA. Disulfide bonds link Cys-28-Cys-75 and Cys-63-Cys-114. 4 N-linked (GlcNAc...) asparagine glycosylation sites follow: Asn-53, Asn-85, Asn-98, and Asn-138. Intrachain disulfides connect Cys-187–Cys-441, Cys-256–Cys-273, and Cys-282–Cys-291. The active-site Acyl-ester intermediate is Ser-188. Asn-246 carries N-linked (GlcNAc...) asparagine glycosylation. Residues Asp-257, Asp-260, Ala-262, Asp-264, and Ile-266 each contribute to the Ca(2+) site. N-linked (GlcNAc...) asparagine glycans are attached at residues Asn-287 and Asn-311. Active-site charge relay system residues include Asp-400 and His-440. Asn-490 and Asn-516 each carry an N-linked (GlcNAc...) asparagine glycan. The cysteines at positions 503 and 525 are disulfide-linked.

Belongs to the tannase family.

The protein resides in the secreted. It carries out the reaction feruloyl-polysaccharide + H2O = ferulate + polysaccharide.. Functionally, involved in degradation of plant cell walls. Hydrolyzes the feruloyl-arabinose ester bond in arabinoxylans as well as the feruloyl-galactose and feruloyl-arabinose ester bonds in pectin. The protein is Probable feruloyl esterase B-1 (faeB-1) of Aspergillus flavus (strain ATCC 200026 / FGSC A1120 / IAM 13836 / NRRL 3357 / JCM 12722 / SRRC 167).